The following is a 532-amino-acid chain: [Pyruvate dehydrogenase [acetyl-transferring]]-phosphatase 2, mitochondrial (532 aa).

A mitochondrion-targeting transit peptide spans 1-69 (MSSTVSYWIF…FALRKAYRHT (69 aa)). The PPM-type phosphatase domain maps to 107–518 (NSVLRFESNQ…YRDDITVMVV (412 aa)). Mn(2+) contacts are provided by aspartate 144, glycine 145, aspartate 415, and aspartate 511.

Belongs to the PP2C family. The cofactor is Mg(2+).

Its subcellular location is the mitochondrion. The catalysed reaction is O-phospho-L-seryl-[pyruvate dehydrogenase E1 alpha subunit] + H2O = L-seryl-[pyruvate dehydrogenase E1 alpha subunit] + phosphate. In terms of biological role, mitochondrial enzyme that catalyzes the dephosphorylation and concomitant reactivation of the alpha subunit of the E1 component of the pyruvate dehydrogenase complex (PDC), thereby stimulating the conversion of pyruvate into acetyl-CoA. Acts as a crucial regulator of T cell metabolism and function, with a particular focus on T-helper Th17. This chain is [Pyruvate dehydrogenase [acetyl-transferring]]-phosphatase 2, mitochondrial (Pdp2), found in Mus musculus (Mouse).